A 394-amino-acid polypeptide reads, in one-letter code: MAKEIFQRTKPHMNVGTIGHVDHGKTTLTAAISIYCSKVNKDAKALKYEDIDNAPEEKARGITINARHIEYETANRHYAHVDCPGHADYIKNMITGAAQMDAAILLVAADSGAEPQTKEHLLLAQRMGIKKIIVFLNKLDLADPELVELVEVEVLELVEKYGFPSDTPIVKGSAFGAMSNPDDPEATKCIKELLETMDNYFDLPERDIDKPFLLAIEDVFSISGRGTVATGRIERGVIKVGQEVEIVGIRETRKTTVTGVEMFQKILEQGEAGDNVGLLLRGVDKKDIERGQVIAALGTITPHKKFKASIYCLTKEEGGRHKPFFSGYRPQFFFRTTDVTGMVSLEGKEMVMPGDNVDIVVELISSIAMDKNVEFAVREGGRTVASGRILEILE.

Residues 10-205 (KPHMNVGTIG…TMDNYFDLPE (196 aa)) form the tr-type G domain. The G1 stretch occupies residues 19-26 (GHVDHGKT). Residue 19 to 26 (GHVDHGKT) coordinates GTP. Thr26 is a binding site for Mg(2+). The segment at 61-65 (GITIN) is G2. Residues 82-85 (DCPG) form a G3 region. Residues 82 to 86 (DCPGH) and 137 to 140 (NKLD) each bind GTP. Residues 137-140 (NKLD) are G4. The tract at residues 173 to 175 (SAF) is G5.

This sequence belongs to the TRAFAC class translation factor GTPase superfamily. Classic translation factor GTPase family. EF-Tu/EF-1A subfamily. In terms of assembly, monomer.

Its subcellular location is the cytoplasm. It catalyses the reaction GTP + H2O = GDP + phosphate + H(+). Functionally, GTP hydrolase that promotes the GTP-dependent binding of aminoacyl-tRNA to the A-site of ribosomes during protein biosynthesis. The polypeptide is Elongation factor Tu (Borrelia duttonii (strain Ly)).